The chain runs to 397 residues: 1-deoxy-D-xylulose 5-phosphate reductoisomerase (397 aa).

The NADPH site is built by Thr10, Gly11, Ser12, Ile13, Gln38, and Asn123. 1-deoxy-D-xylulose 5-phosphate is bound at residue Lys124. Glu125 contributes to the NADPH binding site. Asp149 is a Mn(2+) binding site. Residues Ser150, Glu151, Ser185, and His208 each coordinate 1-deoxy-D-xylulose 5-phosphate. Glu151 contacts Mn(2+). Position 214 (Gly214) interacts with NADPH. Positions 221, 226, 227, and 230 each coordinate 1-deoxy-D-xylulose 5-phosphate. Glu230 is a Mn(2+) binding site.

This sequence belongs to the DXR family. The cofactor is Mg(2+). Requires Mn(2+) as cofactor.

The catalysed reaction is 2-C-methyl-D-erythritol 4-phosphate + NADP(+) = 1-deoxy-D-xylulose 5-phosphate + NADPH + H(+). Its pathway is isoprenoid biosynthesis; isopentenyl diphosphate biosynthesis via DXP pathway; isopentenyl diphosphate from 1-deoxy-D-xylulose 5-phosphate: step 1/6. In terms of biological role, catalyzes the NADPH-dependent rearrangement and reduction of 1-deoxy-D-xylulose-5-phosphate (DXP) to 2-C-methyl-D-erythritol 4-phosphate (MEP). The chain is 1-deoxy-D-xylulose 5-phosphate reductoisomerase from Idiomarina loihiensis (strain ATCC BAA-735 / DSM 15497 / L2-TR).